Reading from the N-terminus, the 771-residue chain is MFVIKRNGYKENVMFDKITSRIRKLCYGLNTDHIDPIKIAMKVIQGIYNGVTTVELDTLTAEIAATCTTQHPDYAILAARIAVSNLHKETKKLFSEVMKDLFNYVNPKNGKHSPIISSITMDVVNKYKDKLNSVIIYERDFSYNYFGFKTLEKSYLLKINNKIVERPQHMLMRVAVGIHQWDIDSAIETYNLLSEKWFTHASPTLFNAGTSRHQMSSCFLLNMMDDSIEGIYDTLKRCALISKMAGGIGLSISNIRASGSYISGTNGASNGIIPMLRVYNNTARYIDQGGNKRPGVMTIYLEPWHSDIMAFLDLKKNTGNEEHRTRDLFIALWIPDLFMKRVKDDGEWSLMCPDECPGLDNVWGDEFERLYTLYEREKRYKSIIKARVVWKAIIESQIETGTPFILYKDACNKKSNQQNLGTIKCSNLCTEIIQYADANEVAVCNLASIALNMFVIDGQFDFLKLKDVVKVIVRNLNKIIDINYYPIPEAEISNKRHRPIGIGVQGLADAFILLNYPFDSLEAQDLNKKIFETIYYGALEASCELAEKEGPYDTYVGSYASNGILQYDLWNVVPSDLWNWEPLKDKIRTYGLRNSLLVAPMPTASTAQILGNNESVEPYTSNIYTRRVLSGEFQVVNPHLLRVLTERKLWNDEIKNRIMVDGGSIQNTNLPEDIKRVYKTIWEIPQKTIIKMAADRGAFIDQSQSMNIHIADPSYSKLTSMHFYGWSLGLKTGMYYLRTKPASAPIQFTLDKDKIKPLVVCDSEICTSCSG.

Positions 1 to 92 (MFVIKRNGYK…VSNLHKETKK (92 aa)) constitute an ATP-cone domain. ATP-binding positions include 5-6 (KR), 11-17 (ENVMFDK), Thr-53, Asp-57, and Lys-88. Positions 202 and 217 each coordinate GDP. DTTP contacts are provided by residues 226-228 (DSI), Lys-243, and Arg-256. Asn-427 contacts GDP. Asn-427 (proton acceptor) is an active-site residue. Catalysis depends on Cys-429, which acts as the Cysteine radical intermediate. Residues Glu-431 and 603 to 606 (TAST) contribute to the GDP site. Glu-431 functions as the Proton acceptor in the catalytic mechanism.

The protein belongs to the ribonucleoside diphosphate reductase large chain family. In terms of assembly, interacts with RNR2/OPG047 subunit. It depends on Mg(2+) as a cofactor.

The catalysed reaction is a 2'-deoxyribonucleoside 5'-diphosphate + [thioredoxin]-disulfide + H2O = a ribonucleoside 5'-diphosphate + [thioredoxin]-dithiol. Functionally, ribonucleoside-diphosphate reductase holoenzyme provides the precursors necessary for viral DNA synthesis. Allows virus growth in non-dividing cells. Catalyzes the biosynthesis of deoxyribonucleotides from the corresponding ribonucleotides. This Homo sapiens (Human) protein is Ribonucleoside-diphosphate reductase large subunit (OPG080).